The sequence spans 206 residues: MGQKVNPKVFRLQINSNTWDSVWCATDDYKQKLHQDLFIRSYINESFKHAGISKVTVERTVTLVSVIIHSSKPGVIIGKKGLDVEKIKQKIAKKVESSVEVNVVGVKKSEIDAVLISRSITHQLEKRISCRRAMKKAIQNCLKMGAEGIKVSCSGRLGGAEIARTEWYKEGRLPLHTLRANIDYAFCEAKTICGIIGVKVWVYVGS.

Positions 39-107 (IRSYINESFK…SVEVNVVGVK (69 aa)) constitute a KH type-2 domain.

This sequence belongs to the universal ribosomal protein uS3 family. In terms of assembly, part of the 30S ribosomal subunit. Forms a tight complex with proteins S10 and S14.

In terms of biological role, binds the lower part of the 30S subunit head. Binds mRNA in the 70S ribosome, positioning it for translation. This Wolbachia pipientis subsp. Culex pipiens (strain wPip) protein is Small ribosomal subunit protein uS3.